The chain runs to 199 residues: dITP/XTP pyrophosphatase (199 aa).

Position 8–13 (8–13) interacts with substrate; it reads TSNINK. Catalysis depends on aspartate 68, which acts as the Proton acceptor. Aspartate 68 contacts Mg(2+). Substrate is bound by residues serine 69, 155 to 158, lysine 177, and 182 to 183; these read FGYN and HR.

The protein belongs to the HAM1 NTPase family. In terms of assembly, homodimer. Mg(2+) is required as a cofactor.

The enzyme catalyses XTP + H2O = XMP + diphosphate + H(+). It catalyses the reaction dITP + H2O = dIMP + diphosphate + H(+). The catalysed reaction is ITP + H2O = IMP + diphosphate + H(+). Pyrophosphatase that catalyzes the hydrolysis of nucleoside triphosphates to their monophosphate derivatives, with a high preference for the non-canonical purine nucleotides XTP (xanthosine triphosphate), dITP (deoxyinosine triphosphate) and ITP. Seems to function as a house-cleaning enzyme that removes non-canonical purine nucleotides from the nucleotide pool, thus preventing their incorporation into DNA/RNA and avoiding chromosomal lesions. This chain is dITP/XTP pyrophosphatase, found in Borrelia recurrentis (strain A1).